The chain runs to 100 residues: Small ribosomal subunit protein uS14c (100 aa).

The interval 1–31 is disordered; sequence MAKKSLIQREKKRQKLEQKYHSIRRSSKKEI.

It belongs to the universal ribosomal protein uS14 family. Part of the 30S ribosomal subunit.

The protein localises to the plastid. The protein resides in the chloroplast. Its function is as follows. Binds 16S rRNA, required for the assembly of 30S particles. The polypeptide is Small ribosomal subunit protein uS14c (Atropa belladonna (Belladonna)).